Reading from the N-terminus, the 71-residue chain is MPYYRRRVSPIKPGDPIDYKDVDLLRRFITERGKILPRRITGLTARQQRDLTRAIKQARVLALLPFINREG.

This sequence belongs to the bacterial ribosomal protein bS18 family. Part of the 30S ribosomal subunit. Forms a tight heterodimer with protein bS6.

Functionally, binds as a heterodimer with protein bS6 to the central domain of the 16S rRNA, where it helps stabilize the platform of the 30S subunit. This is Small ribosomal subunit protein bS18 from Acaryochloris marina (strain MBIC 11017).